A 103-amino-acid polypeptide reads, in one-letter code: Large ribosomal subunit protein bL21 (103 aa).

It belongs to the bacterial ribosomal protein bL21 family. In terms of assembly, part of the 50S ribosomal subunit. Contacts protein L20.

This protein binds to 23S rRNA in the presence of protein L20. The sequence is that of Large ribosomal subunit protein bL21 from Methylibium petroleiphilum (strain ATCC BAA-1232 / LMG 22953 / PM1).